A 280-amino-acid polypeptide reads, in one-letter code: DegV domain-containing protein Mb2440c (280 aa).

A DegV domain is found at 3–274 (VVVVTDTSCR…AGAVGVCVDV (272 aa)). Ser89 provides a ligand contact to hexadecanoate.

Functionally, may bind long-chain fatty acids, such as palmitate, and may play a role in lipid transport or fatty acid metabolism. The chain is DegV domain-containing protein Mb2440c from Mycobacterium bovis (strain ATCC BAA-935 / AF2122/97).